The chain runs to 315 residues: Probable cell division protein WhiA (315 aa).

Residues 274–308 (SLKNLGELIPGGPISKSGINHRLRKLNEIAEKIRA) constitute a DNA-binding region (H-T-H motif).

Belongs to the WhiA family.

Its function is as follows. Involved in cell division and chromosome segregation. This is Probable cell division protein WhiA from Ligilactobacillus salivarius (strain UCC118) (Lactobacillus salivarius).